We begin with the raw amino-acid sequence, 432 residues long: Transcriptional adapter 3 (432 aa).

Residue lysine 21 forms a Glycyl lysine isopeptide (Lys-Gly) (interchain with G-Cter in SUMO2) linkage. The stretch at 40–69 (IEELDTLQLELETLLSSASRRLRVLEAETQ) forms a coiled coil. The segment at 87–126 (GRDHELGAPPKHGKPKKQKLEGKAGHGPGPGPGRPKSKNL) is disordered. Lysine 129 is covalently cross-linked (Glycyl lysine isopeptide (Lys-Gly) (interchain with G-Cter in SUMO2)). Residues 272–319 (NIISPMEDSPIPDMSGKESGADGASTSPRNQNKPFSVPHTKSLESRIK) are disordered. 2 positions are modified to phosphoserine: serine 280 and serine 298. Positions 295-305 (ASTSPRNQNKP) are enriched in polar residues. A coiled-coil region spans residues 367–407 (LLRLAKEEVSRQELRQRVRMADNEVMDAFRKIMAARQKKRT). Lysine 418 is modified (N6-acetyllysine).

It belongs to the NGG1 family. In terms of assembly, the PCAF complex is composed of a number of TBP-associated factors (TAFS), such as TAF5, TAF5L, TAF6, TAF6L, TAF9, TAF10 and TAF12, PCAF, and also PCAF-associated factors (PAFs), such as TADA2L/ADA2, TADA3L/ADA3 and SPT3. Interacts directly with TADA2L and PCAF and also with the high-risk HPV oncoprotein E6. Component of the STAGA transcription coactivator-HAT complex, at least composed of SUPT3H, GCN5L2, TAF5L, TAF6L, SUPT7L, TADA3L, TAD1L, TAF10, TAF12, TRRAP and TAF9. Component of the TFTC-HAT complex. Component of the ADA2A-containing complex (ATAC), composed of KAT14, KAT2A, TADA2L, TADA3L, ZZ3, MBIP, WDR5, YEATS2, CCDC101 and DR1. As to expression, ubiquitously expressed.

It is found in the nucleus. In terms of biological role, functions as a component of the PCAF complex. The PCAF complex is capable of efficiently acetylating histones in a nucleosomal context. The PCAF complex could be considered as the human version of the yeast SAGA complex. Also known as a coactivator for p53/TP53-dependent transcriptional activation. Component of the ATAC complex, a complex with histone acetyltransferase activity on histones H3 and H4. This is Transcriptional adapter 3 (TADA3) from Homo sapiens (Human).